We begin with the raw amino-acid sequence, 83 residues long: Small ribosomal subunit protein uS17 (83 aa).

The protein belongs to the universal ribosomal protein uS17 family. In terms of assembly, part of the 30S ribosomal subunit.

Functionally, one of the primary rRNA binding proteins, it binds specifically to the 5'-end of 16S ribosomal RNA. The protein is Small ribosomal subunit protein uS17 of Aliarcobacter butzleri (strain RM4018) (Arcobacter butzleri).